The following is a 484-amino-acid chain: NADH-quinone oxidoreductase subunit N (484 aa).

A run of 14 helical transmembrane segments spans residues 11–31 (SLWI…VLLI), 42–62 (VTYY…FNLI), 79–98 (MASV…MVYS), 113–133 (FVLV…YSLL), 134–154 (TLYL…AIAR), 167–187 (FVLG…IYGI), 211–231 (LIIN…LGAV), 248–268 (VTLF…VRIL), 279–299 (WSDL…VVAL), 313–333 (ISHV…GYGA), 335–355 (AFYM…IILL), 378–398 (FALM…LVGF), 408–428 (VVSA…VISA), and 457–477 (LVLS…DFWM).

It belongs to the complex I subunit 2 family. In terms of assembly, NDH-1 is composed of 14 different subunits. Subunits NuoA, H, J, K, L, M, N constitute the membrane sector of the complex.

Its subcellular location is the cell inner membrane. The enzyme catalyses a quinone + NADH + 5 H(+)(in) = a quinol + NAD(+) + 4 H(+)(out). NDH-1 shuttles electrons from NADH, via FMN and iron-sulfur (Fe-S) centers, to quinones in the respiratory chain. The immediate electron acceptor for the enzyme in this species is believed to be ubiquinone. Couples the redox reaction to proton translocation (for every two electrons transferred, four hydrogen ions are translocated across the cytoplasmic membrane), and thus conserves the redox energy in a proton gradient. The chain is NADH-quinone oxidoreductase subunit N from Ruthia magnifica subsp. Calyptogena magnifica.